We begin with the raw amino-acid sequence, 177 residues long: Photosystem I assembly protein Ycf4 (177 aa).

Helical transmembrane passes span 20–40 (VALLVSIGGVGFLLTSASSYF) and 60–80 (LVMGAYGVGAVLLSSYLWAVI).

This sequence belongs to the Ycf4 family.

It localises to the cellular thylakoid membrane. In terms of biological role, seems to be required for the assembly of the photosystem I complex. The protein is Photosystem I assembly protein Ycf4 of Synechococcus sp. (strain RCC307).